Consider the following 251-residue polypeptide: Phosphate import ATP-binding protein PstB 2 (251 aa).

One can recognise an ABC transporter domain in the interval 6–246; that stretch reads FNIENLDLFY…PRDDRTRGYV (241 aa). Position 38–45 (38–45) interacts with ATP; it reads GPSGCGKS.

It belongs to the ABC transporter superfamily. Phosphate importer (TC 3.A.1.7) family. The complex is composed of two ATP-binding proteins (PstB), two transmembrane proteins (PstC and PstA) and a solute-binding protein (PstS).

The protein localises to the cell inner membrane. The catalysed reaction is phosphate(out) + ATP + H2O = ADP + 2 phosphate(in) + H(+). Its function is as follows. Part of the ABC transporter complex PstSACB involved in phosphate import. Responsible for energy coupling to the transport system. This chain is Phosphate import ATP-binding protein PstB 2, found in Vibrio cholerae serotype O1 (strain ATCC 39315 / El Tor Inaba N16961).